Reading from the N-terminus, the 1022-residue chain is GPI ethanolamine phosphate transferase 1 (1022 aa).

Residues 1–6 are Cytoplasmic-facing; sequence MARVGR. A helical transmembrane segment spans residues 7–27; sequence VGFLTLAVVFHLMYAYSIFDI. Topologically, residues 28-466 are lumenal; that stretch reads YFVSPIVSGM…LQTYDWLFLR (439 aa). N-linked (GlcNAc...) asparagine glycosylation is found at Asn-148 and Asn-433. Residues 467 to 487 traverse the membrane as a helical segment; that stretch reads TIVSLGYLGWIAYALTTVIDL. Topologically, residues 488–498 are cytoplasmic; that stretch reads HVLHGKSESNR. Residues 499 to 519 form a helical membrane-spanning segment; sequence TTFSIMFFSSILVALFSVLLY. Residues 520-560 lie on the Lumenal side of the membrane; the sequence is QGSSWRYYLYALFPIFFWEEVFARRKALLAGREILLGHVHS. Residues 561-581 form a helical membrane-spanning segment; that stretch reads VSGYFAFAIQLLLYVGVLEAL. The Cytoplasmic segment spans residues 582 to 589; sequence VQSYFHRD. Residues 590–610 traverse the membrane as a helical segment; that stretch reads IFTVCFILGGFWPITYGTKFL. At 611–614 the chain is on the lumenal side; it reads GQHK. The chain crosses the membrane as a helical span at residues 615–635; sequence LLSASWALGCFLMSIFTLLPA. The Cytoplasmic portion of the chain corresponds to 636-640; that stretch reads NKVED. A helical membrane pass occupies residues 641-661; it reads MMMISCGSLLMFLTGLLYLIF. Over 662 to 685 the chain is Lumenal; that stretch reads ERSILGQKRSSDPNSVVSSCGSRT. A helical transmembrane segment spans residues 686–706; sequence IMGAQVGMILLALIVTRSSVA. Topologically, residues 707-713 are cytoplasmic; that stretch reads SLQAKQG. Residues 714–734 form a helical membrane-spanning segment; it reads LPLGNQVLGWAILVSSLLLPF. Over 735–749 the chain is Lumenal; sequence LHRLYPNSHYLHRLM. 2 consecutive transmembrane segments (helical) span residues 750–770 and 771–791; these read VIFL…EGLF and YFVF…IYIH. The Lumenal segment spans residues 792-837; the sequence is TTAPTREQDHSVANGSLPAKKPSPGNTVVVEGQPYRYRTLSVSDAR. Asn-805 carries an N-linked (GlcNAc...) asparagine glycan. A helical transmembrane segment spans residues 838–858; that stretch reads VALFFFFLLQSGFFSTGNIAS. Residues 859–880 are Cytoplasmic-facing; that stretch reads VSSFSLDSVYRLIPIFNPFAQG. A helical transmembrane segment spans residues 881–901; it reads ALLILKLLIPFAIISANLGIL. The Lumenal segment spans residues 902–910; sequence NHRLEVAPS. The helical transmembrane segment at 911 to 931 threads the bilayer; sequence ALFMVVMSISDVMTLNFFYMV. Topologically, residues 932–947 are cytoplasmic; that stretch reads RDEGSWLEIGTTISHF. A helical membrane pass occupies residues 948 to 968; the sequence is CIASFLCTFVAVLEFLSELFI. Residues 969–1022 are Lumenal-facing; the sequence is SGVDFGHPATTVGSAVAKAVNGSVACGHSPDSDISGEDSTSVGITAKADPDARS. A glycan (N-linked (GlcNAc...) asparagine) is linked at Asn-989. Residues 998 to 1022 form a disordered region; that stretch reads PDSDISGEDSTSVGITAKADPDARS.

Belongs to the PIGG/PIGN/PIGO family. PIGN subfamily.

The protein localises to the endoplasmic reticulum membrane. Its pathway is glycolipid biosynthesis; glycosylphosphatidylinositol-anchor biosynthesis. In terms of biological role, ethanolamine phosphate transferase involved in glycosylphosphatidylinositol-anchor biosynthesis. Transfers ethanolamine phosphate to the first alpha-1,4-linked mannose of the glycosylphosphatidylinositol precursor of GPI-anchor. This chain is GPI ethanolamine phosphate transferase 1 (mcd4), found in Aspergillus oryzae (strain ATCC 42149 / RIB 40) (Yellow koji mold).